The primary structure comprises 234 residues: Endonuclease V (234 aa).

Mg(2+)-binding residues include Asp-36 and Asp-104.

The protein belongs to the endonuclease V family. Mg(2+) is required as a cofactor.

It localises to the cytoplasm. It catalyses the reaction Endonucleolytic cleavage at apurinic or apyrimidinic sites to products with a 5'-phosphate.. Functionally, DNA repair enzyme involved in the repair of deaminated bases. Selectively cleaves double-stranded DNA at the second phosphodiester bond 3' to a deoxyinosine leaving behind the intact lesion on the nicked DNA. The sequence is that of Endonuclease V from Yersinia enterocolitica serotype O:8 / biotype 1B (strain NCTC 13174 / 8081).